The chain runs to 497 residues: Putative aldehyde dehydrogenase AldA (497 aa).

An NAD(+)-binding site is contributed by 213 to 219; the sequence is GKGSESG. Residues Glu257 and Cys291 contribute to the active site.

Belongs to the aldehyde dehydrogenase family.

It catalyses the reaction an aldehyde + NAD(+) + H2O = a carboxylate + NADH + 2 H(+). This Staphylococcus epidermidis (strain ATCC 35984 / DSM 28319 / BCRC 17069 / CCUG 31568 / BM 3577 / RP62A) protein is Putative aldehyde dehydrogenase AldA (aldA).